The following is a 171-amino-acid chain: Translationally-controlled tumor protein homolog (171 aa).

The 171-residue stretch at 1–171 folds into the TCTP domain; sequence MKIWKDIFTG…FKHGLEEEKF (171 aa).

The protein belongs to the TCTP family.

It localises to the cytoplasm. Its function is as follows. Involved in calcium binding and microtubule stabilization. The sequence is that of Translationally-controlled tumor protein homolog (Tctp) from Aedes albopictus (Asian tiger mosquito).